The chain runs to 317 residues: Ribosomal RNA large subunit methyltransferase F (317 aa).

Belongs to the methyltransferase superfamily. METTL16/RlmF family.

The protein localises to the cytoplasm. It carries out the reaction adenosine(1618) in 23S rRNA + S-adenosyl-L-methionine = N(6)-methyladenosine(1618) in 23S rRNA + S-adenosyl-L-homocysteine + H(+). Functionally, specifically methylates the adenine in position 1618 of 23S rRNA. In Pseudomonas putida (strain ATCC 47054 / DSM 6125 / CFBP 8728 / NCIMB 11950 / KT2440), this protein is Ribosomal RNA large subunit methyltransferase F.